We begin with the raw amino-acid sequence, 94 residues long: DNA-directed RNA polymerase subunit omega (94 aa).

This sequence belongs to the RNA polymerase subunit omega family. In terms of assembly, the RNAP catalytic core consists of 2 alpha, 1 beta, 1 beta' and 1 omega subunit. When a sigma factor is associated with the core the holoenzyme is formed, which can initiate transcription.

It carries out the reaction RNA(n) + a ribonucleoside 5'-triphosphate = RNA(n+1) + diphosphate. Its function is as follows. Promotes RNA polymerase assembly. Latches the N- and C-terminal regions of the beta' subunit thereby facilitating its interaction with the beta and alpha subunits. In Parafrankia sp. (strain EAN1pec), this protein is DNA-directed RNA polymerase subunit omega.